The sequence spans 173 residues: Cytochrome b6-f complex subunit 4, chloroplastic (173 aa).

The N-terminal 14 residues, 1 to 14, are a transit peptide targeting the chloroplast; that stretch reads ESALERRSSSVVMN. 3 consecutive transmembrane segments (helical) span residues 49–69, 108–128, and 144–164; these read LLYM…GLAV, LLGV…PFIE, and SVFL…TLPI.

This sequence belongs to the cytochrome b family. PetD subfamily. As to quaternary structure, the 4 large subunits of the cytochrome b6-f complex are cytochrome b6, subunit IV (17 kDa polypeptide, petD), cytochrome f and the Rieske protein, while the 4 small subunits are petG, petL, petM and petN. The complex functions as a dimer.

The protein localises to the plastid. It localises to the chloroplast thylakoid membrane. Its function is as follows. Component of the cytochrome b6-f complex, which mediates electron transfer between photosystem II (PSII) and photosystem I (PSI), cyclic electron flow around PSI, and state transitions. The sequence is that of Cytochrome b6-f complex subunit 4, chloroplastic from Euglena gracilis.